We begin with the raw amino-acid sequence, 442 residues long: Urokinase-type plasminogen activator (442 aa).

The signal sequence occupies residues 1–20; sequence MRVLRACLSLCVLVVSDSKG. Residues 29–65 form the EGF-like domain; that stretch reads GASNCGCLNGGKCVSYKYFSNIQRCSCPKKFQGEHCE. 12 disulfides stabilise this stretch: Cys33–Cys41, Cys35–Cys53, Cys55–Cys64, Cys72–Cys153, Cys93–Cys135, Cys124–Cys148, Cys179–Cys310, Cys220–Cys236, Cys228–Cys299, Cys324–Cys393, Cys356–Cys372, and Cys383–Cys411. Residues 36-59 form a binds urokinase plasminogen activator surface receptor region; it reads LNGGKCVSYKYFSNIQRCSCPKKF. Positions 72-153 constitute a Kringle domain; sequence CFEGNGHSYR…LVQECMVPNC (82 aa). A glycan (N-linked (GlcNAc...) asparagine) is linked at Asn152. Residues 154 to 189 form a connecting peptide region; the sequence is SGGESHRPAYDGKNPFSTPEKVEFQCGQKALRPRFK. The Peptidase S1 domain maps to 190–435; that stretch reads IVGGKSTTIE…FLTWIHTHVG (246 aa). Catalysis depends on charge relay system residues His235 and Asp286. The active-site Charge relay system is Ser387.

The protein belongs to the peptidase S1 family. Found in high and low molecular mass forms. Each consists of two chains, A and B. The high molecular mass form contains a long chain A which is cleaved to yield a short chain A. Forms heterodimer with SERPINA5. Binds LRP1B; binding is followed by internalization and degradation. Interacts with MRC2. Interacts with PLAUR. In complex with SERPINE1, interacts with PLAUR/uPAR. Interacts with SORL1 and LRP1, either alone or in complex with SERPINE1; these interactions are abolished in the presence of LRPAP1/RAP. The ternary complex composed of PLAUR-PLAU-PAI1 also interacts with SORLA. In terms of processing, produced as an inactive single-chain protein (pro-uPA or sc-uPA), is processed into the active disulfide-linked two-chain form of PLAU/uPA by a proteolytic event mediated, at least, by TMPRSS4.

Its subcellular location is the secreted. The catalysed reaction is Specific cleavage of Arg-|-Val bond in plasminogen to form plasmin.. Inhibited by SERPINA5. Inhibited by SERPINE1. In terms of biological role, specifically cleaves the zymogen plasminogen to form the active enzyme plasmin. The chain is Urokinase-type plasminogen activator (PLAU) from Sus scrofa (Pig).